The sequence spans 309 residues: tRNA pseudouridine synthase B (309 aa).

Aspartate 39 functions as the Nucleophile in the catalytic mechanism.

Belongs to the pseudouridine synthase TruB family. Type 1 subfamily.

The enzyme catalyses uridine(55) in tRNA = pseudouridine(55) in tRNA. Its function is as follows. Responsible for synthesis of pseudouridine from uracil-55 in the psi GC loop of transfer RNAs. The sequence is that of tRNA pseudouridine synthase B from Bacillus subtilis (strain 168).